The primary structure comprises 139 residues: Nucleoside diphosphate kinase (139 aa).

Residues lysine 10, phenylalanine 58, arginine 86, threonine 92, arginine 103, and asparagine 113 each coordinate ATP. Catalysis depends on histidine 116, which acts as the Pros-phosphohistidine intermediate.

It belongs to the NDK family. As to quaternary structure, homotetramer. Requires Mg(2+) as cofactor.

The protein resides in the cytoplasm. It catalyses the reaction a 2'-deoxyribonucleoside 5'-diphosphate + ATP = a 2'-deoxyribonucleoside 5'-triphosphate + ADP. It carries out the reaction a ribonucleoside 5'-diphosphate + ATP = a ribonucleoside 5'-triphosphate + ADP. Its function is as follows. Major role in the synthesis of nucleoside triphosphates other than ATP. The ATP gamma phosphate is transferred to the NDP beta phosphate via a ping-pong mechanism, using a phosphorylated active-site intermediate. The protein is Nucleoside diphosphate kinase of Desulfovibrio desulfuricans (strain ATCC 27774 / DSM 6949 / MB).